A 493-amino-acid chain; its full sequence is Alcohol-forming fatty acyl-CoA reductase (493 aa).

This sequence belongs to the fatty acyl-CoA reductase family.

It carries out the reaction a long-chain fatty acyl-CoA + 2 NADPH + 2 H(+) = a long-chain primary fatty alcohol + 2 NADP(+) + CoA. Functionally, NADPH-dependent alcohol-forming fatty acyl-coenzyme A reductase that catalyzes the reduction of fatty acyl-CoA to fatty alcohols. The recombinant enzyme accepts saturated and mono-unsaturated fatty acyl-CoAs of 16 to 22 carbons. This chain is Alcohol-forming fatty acyl-CoA reductase, found in Simmondsia chinensis (Jojoba).